Here is a 213-residue protein sequence, read N- to C-terminus: Probable transaldolase (213 aa).

The Schiff-base intermediate with substrate role is filled by lysine 83.

The protein belongs to the transaldolase family. Type 3B subfamily.

The protein resides in the cytoplasm. The enzyme catalyses D-sedoheptulose 7-phosphate + D-glyceraldehyde 3-phosphate = D-erythrose 4-phosphate + beta-D-fructose 6-phosphate. Its pathway is carbohydrate degradation; pentose phosphate pathway; D-glyceraldehyde 3-phosphate and beta-D-fructose 6-phosphate from D-ribose 5-phosphate and D-xylulose 5-phosphate (non-oxidative stage): step 2/3. Transaldolase is important for the balance of metabolites in the pentose-phosphate pathway. This is Probable transaldolase from Geobacillus kaustophilus (strain HTA426).